The chain runs to 325 residues: Beta-ketoacyl-[acyl-carrier-protein] synthase III (325 aa).

Active-site residues include C112 and H250. The ACP-binding stretch occupies residues 251–255; it reads QANIR. N280 is a catalytic residue.

Belongs to the thiolase-like superfamily. FabH family. Homodimer.

It is found in the cytoplasm. It catalyses the reaction malonyl-[ACP] + acetyl-CoA + H(+) = 3-oxobutanoyl-[ACP] + CO2 + CoA. It participates in lipid metabolism; fatty acid biosynthesis. Its function is as follows. Catalyzes the condensation reaction of fatty acid synthesis by the addition to an acyl acceptor of two carbons from malonyl-ACP. Catalyzes the first condensation reaction which initiates fatty acid synthesis and may therefore play a role in governing the total rate of fatty acid production. Possesses both acetoacetyl-ACP synthase and acetyl transacylase activities. Its substrate specificity determines the biosynthesis of branched-chain and/or straight-chain of fatty acids. The polypeptide is Beta-ketoacyl-[acyl-carrier-protein] synthase III (Clostridium acetobutylicum (strain ATCC 824 / DSM 792 / JCM 1419 / IAM 19013 / LMG 5710 / NBRC 13948 / NRRL B-527 / VKM B-1787 / 2291 / W)).